Reading from the N-terminus, the 222-residue chain is Small ribosomal subunit protein uS7m (222 aa).

Belongs to the universal ribosomal protein uS7 family. In terms of assembly, part of the small ribosomal subunit.

It is found in the mitochondrion. Its function is as follows. One of the primary rRNA binding proteins, it binds directly to 18S rRNA where it nucleates assembly of the head domain of the small subunit. The polypeptide is Small ribosomal subunit protein uS7m (RPS7) (Prototheca wickerhamii).